A 158-amino-acid chain; its full sequence is S-ribosylhomocysteine lyase (158 aa).

Residues H56, H60, and C125 each contribute to the Fe cation site.

It belongs to the LuxS family. As to quaternary structure, homodimer. Fe cation is required as a cofactor.

The enzyme catalyses S-(5-deoxy-D-ribos-5-yl)-L-homocysteine = (S)-4,5-dihydroxypentane-2,3-dione + L-homocysteine. Functionally, involved in the synthesis of autoinducer 2 (AI-2) which is secreted by bacteria and is used to communicate both the cell density and the metabolic potential of the environment. The regulation of gene expression in response to changes in cell density is called quorum sensing. Catalyzes the transformation of S-ribosylhomocysteine (RHC) to homocysteine (HC) and 4,5-dihydroxy-2,3-pentadione (DPD). The protein is S-ribosylhomocysteine lyase of Leuconostoc citreum (strain KM20).